The sequence spans 397 residues: GPI mannosyltransferase 1 (397 aa).

9 helical membrane passes run 5-25 (ECLL…YGIY), 79-99 (WVHF…VMVM), 111-128 (LILA…TVST), 156-176 (GFVY…ALPI), 193-213 (LTMG…MYYI), 257-277 (WAEF…YVLW), 307-327 (YFIW…LSGA), 330-350 (IFLI…GYLL), and 362-382 (LFSA…QFIL).

The protein belongs to the PIGM family.

The protein resides in the endoplasmic reticulum membrane. The protein operates within glycolipid biosynthesis; glycosylphosphatidylinositol-anchor biosynthesis. Its function is as follows. Mannosyltransferase involved in glycosylphosphatidylinositol-anchor biosynthesis. Transfers the first alpha-1,4-mannose to GlcN-acyl-PI during GPI precursor assembly. Required for cell wall integrity. In Eremothecium gossypii (strain ATCC 10895 / CBS 109.51 / FGSC 9923 / NRRL Y-1056) (Yeast), this protein is GPI mannosyltransferase 1 (GPI14).